Here is a 316-residue protein sequence, read N- to C-terminus: MIYTGIEYIFVNISFVMFFFVTLLNLINLFYKIDKIDHFSKNSMTIAFFCTTGFLITRYLQTRHLPLGNLYESLMFLSWGFSLLYLILEVRDQIGLSHAVLAPGAMLIHAFATLSLPQQMRSPTLLVPALQSQWLMMHVSAMLISYITLLCGSLLAITLLSLFYGKVGSVTLEHKFEKQSFFFLMNPRKNLWKQTGAENYSYFLISNSRKCQLINCLDKWACQTISLGFSLLTIGILSGAVWANEAWGSYWSWDPKETWALVTWLVYAIYLHTKVDKRKMGEGPAMTASMGFFLVWICFLGVNLLGVGLHNYGWLA.

The next 8 membrane-spanning stretches (helical) occupy residues 9–29 (IFVNISFVMFFFVTLLNLINL), 39–61 (FSKNSMTIAFFCTTGFLITRYLQ), 70–90 (LYESLMFLSWGFSLLYLILEV), 94–114 (IGLSHAVLAPGAMLIHAFATL), 143–163 (LISYITLLCGSLLAITLLSLF), 224–244 (TISLGFSLLTIGILSGAVWAN), 257–271 (ETWALVTWLVYAIYL), and 289–309 (SMGFFLVWICFLGVNLLGVGL).

The protein belongs to the CcmF/CycK/Ccl1/NrfE/CcsA family. As to quaternary structure, may interact with Ccs1.

The protein localises to the plastid. It localises to the chloroplast thylakoid membrane. In terms of biological role, required during biogenesis of c-type cytochromes (cytochrome c6 and cytochrome f) at the step of heme attachment. The polypeptide is Cytochrome c biogenesis protein CcsA (Adiantum capillus-veneris (Maidenhair fern)).